We begin with the raw amino-acid sequence, 450 residues long: Chromosomal replication initiator protein DnaA (450 aa).

The tract at residues 1-84 (MENIHDLWDR…AVKFIIPPNQ (84 aa)) is domain I, interacts with DnaA modulators. Residues 84–111 (QDDEELEFQSSKKKQRKPYEETNDFPQS) form a domain II region. The tract at residues 89-108 (LEFQSSKKKQRKPYEETNDF) is disordered. Positions 112-328 (MLNPKYTFDT…GALIRVVAYS (217 aa)) are domain III, AAA+ region. 4 residues coordinate ATP: Gly156, Gly158, Lys159, and Thr160. Positions 329-450 (SLINKEITAD…QEIQEKLKQL (122 aa)) are domain IV, binds dsDNA.

It belongs to the DnaA family. In terms of assembly, oligomerizes as a right-handed, spiral filament on DNA at oriC.

The protein localises to the cytoplasm. Plays an essential role in the initiation and regulation of chromosomal replication. ATP-DnaA binds to the origin of replication (oriC) to initiate formation of the DNA replication initiation complex once per cell cycle. Binds the DnaA box (a 9 base pair repeat at the origin) and separates the double-stranded (ds)DNA. Forms a right-handed helical filament on oriC DNA; dsDNA binds to the exterior of the filament while single-stranded (ss)DNA is stabiized in the filament's interior. The ATP-DnaA-oriC complex binds and stabilizes one strand of the AT-rich DNA unwinding element (DUE), permitting loading of DNA polymerase. After initiation quickly degrades to an ADP-DnaA complex that is not apt for DNA replication. Binds acidic phospholipids. The chain is Chromosomal replication initiator protein DnaA from Geobacillus kaustophilus (strain HTA426).